A 283-amino-acid chain; its full sequence is 4-hydroxybenzoate octaprenyltransferase (283 aa).

The next 9 helical transmembrane spans lie at 16 to 36, 40 to 60, 85 to 105, 108 to 128, 135 to 155, 160 to 180, 204 to 224, 226 to 246, and 263 to 283; these read PIGTYLLAWPTIWALMIAGAG, LRIVVIFLLGTFVMRSAGCVI, ISATEAMIGFIALLAIAFGLV, LNTETVMLSFFAAGVAALYPF, LPQIVLGIAFSFGIPMAFTAL, WFIAGLLFLANILWTVAYDTE, FDRLAIGLLQLATLALLGWIL, LITVELWVWLALAAIFLLFAY, and FLHNHYIGMVFAIGLAVHYWF.

It belongs to the UbiA prenyltransferase family. Mg(2+) is required as a cofactor.

It is found in the cell inner membrane. It catalyses the reaction all-trans-octaprenyl diphosphate + 4-hydroxybenzoate = 4-hydroxy-3-(all-trans-octaprenyl)benzoate + diphosphate. It participates in cofactor biosynthesis; ubiquinone biosynthesis. Its function is as follows. Catalyzes the prenylation of para-hydroxybenzoate (PHB) with an all-trans polyprenyl group. Mediates the second step in the final reaction sequence of ubiquinone-8 (UQ-8) biosynthesis, which is the condensation of the polyisoprenoid side chain with PHB, generating the first membrane-bound Q intermediate 3-octaprenyl-4-hydroxybenzoate. The chain is 4-hydroxybenzoate octaprenyltransferase from Idiomarina loihiensis (strain ATCC BAA-735 / DSM 15497 / L2-TR).